Here is a 173-residue protein sequence, read N- to C-terminus: NADH-ubiquinone oxidoreductase chain 6 (173 aa).

5 consecutive transmembrane segments (helical) span residues 1 to 21 (MTYL…AVAS), 24 to 44 (APYF…GVLV), 53 to 73 (LVLF…SAAL), 86 to 106 (SVVG…GVFW), and 139 to 159 (YGGG…FVVL).

The protein belongs to the complex I subunit 6 family.

It localises to the mitochondrion membrane. It catalyses the reaction a ubiquinone + NADH + 5 H(+)(in) = a ubiquinol + NAD(+) + 4 H(+)(out). Its function is as follows. Core subunit of the mitochondrial membrane respiratory chain NADH dehydrogenase (Complex I) that is believed to belong to the minimal assembly required for catalysis. Complex I functions in the transfer of electrons from NADH to the respiratory chain. The immediate electron acceptor for the enzyme is believed to be ubiquinone. The polypeptide is NADH-ubiquinone oxidoreductase chain 6 (MT-ND6) (Formosania lacustris (Oriental stream loach)).